A 209-amino-acid polypeptide reads, in one-letter code: Holliday junction branch migration complex subunit RuvA (209 aa).

A domain I region spans residues methionine 1–alanine 64. The segment at serine 65–alanine 143 is domain II. Residues glycine 144–alanine 154 are flexible linker. Residues proline 155–glycine 209 form a domain III region.

The protein belongs to the RuvA family. As to quaternary structure, homotetramer. Forms an RuvA(8)-RuvB(12)-Holliday junction (HJ) complex. HJ DNA is sandwiched between 2 RuvA tetramers; dsDNA enters through RuvA and exits via RuvB. An RuvB hexamer assembles on each DNA strand where it exits the tetramer. Each RuvB hexamer is contacted by two RuvA subunits (via domain III) on 2 adjacent RuvB subunits; this complex drives branch migration. In the full resolvosome a probable DNA-RuvA(4)-RuvB(12)-RuvC(2) complex forms which resolves the HJ.

The protein resides in the cytoplasm. The RuvA-RuvB-RuvC complex processes Holliday junction (HJ) DNA during genetic recombination and DNA repair, while the RuvA-RuvB complex plays an important role in the rescue of blocked DNA replication forks via replication fork reversal (RFR). RuvA specifically binds to HJ cruciform DNA, conferring on it an open structure. The RuvB hexamer acts as an ATP-dependent pump, pulling dsDNA into and through the RuvAB complex. HJ branch migration allows RuvC to scan DNA until it finds its consensus sequence, where it cleaves and resolves the cruciform DNA. The chain is Holliday junction branch migration complex subunit RuvA from Methylocella silvestris (strain DSM 15510 / CIP 108128 / LMG 27833 / NCIMB 13906 / BL2).